Here is a 525-residue protein sequence, read N- to C-terminus: Cytochrome P450 monooxygenase bsc2 (525 aa).

A helical transmembrane segment spans residues 12 to 32 (SLFILWLTTLLVSVLATAAYI). Asn-86 and Asn-317 each carry an N-linked (GlcNAc...) asparagine glycan. Cys-456 provides a ligand contact to heme.

This sequence belongs to the cytochrome P450 family. Heme is required as a cofactor.

It is found in the membrane. Its pathway is mycotoxin biosynthesis. Its function is as follows. Cytochrome P450 monooxygenase; part of the gene cluster that mediates the biosynthesis of the diterpene glucoside brassicicene C. In the first step of the brassicicene C biosynthesis, the bifunctional diterpene synthase bsc8 that possesses both prenyl transferase and terpene cyclase activity, converts isopentenyl diphosphate and dimethylallyl diphosphate into geranylgeranyl diphosphate (GGDP) that is further converted into fusicocca-2,10(14)-diene, the first precursor for brassicicene C. Fusicocca-2,10(14)-diene is then substrate of cytochrome P450 monooxygenase bsc1 for hydroxylation at the C-8 position. Oxidation at C-16 position to aldehyde is then catalyzed by the cytochrome P450 monooyxygenase bsc7, yielding fusicocca-2,10(14)-diene-8-beta,16-diol. Follows the isomerization of the double bond and reduction of aldehyde to alcohol catalyzed by the short-chain dehydrogenase/reductase bsc3 to yield the diol compound fusicocca-1,10(14)-diene-8 beta,16-diol. The next step is the oxidation at the C-3 position of fusicocca-2,10(14)-diene-8-beta,16-diol catalyzed by the alpha-ketoglutarate dependent dioxygenase bsc9, to produce a triol compound. Methylation of the hydroxy group at position 16 is performed by the methyltransferase bsc6. 16-O-methylation is followed by oxidation at the C-13 position to ketone and an alkyl shift of the methyl group leads to brassicicene C. Although the probable acetyltransferase bsc4 is included in the gene cluster, no acetylation reactions are necessary for brassicicene C biosynthesis. However, the fact that brassicicene E, which is a structurally related compound having an acetoxy group at position 12, was previously isolated from another strain of A.brassicicola suggests that the ATCC 96836 strain might also produce a small amount of brassicicene E. In Alternaria brassicicola (Dark leaf spot agent), this protein is Cytochrome P450 monooxygenase bsc2.